Consider the following 261-residue polypeptide: 5'-nucleotidase SurE (261 aa).

D8, D9, S43, and N96 together coordinate a divalent metal cation.

It belongs to the SurE nucleotidase family. It depends on a divalent metal cation as a cofactor.

The protein resides in the cytoplasm. It carries out the reaction a ribonucleoside 5'-phosphate + H2O = a ribonucleoside + phosphate. Its function is as follows. Nucleotidase that shows phosphatase activity on nucleoside 5'-monophosphates. In Cereibacter sphaeroides (strain KD131 / KCTC 12085) (Rhodobacter sphaeroides), this protein is 5'-nucleotidase SurE.